The sequence spans 635 residues: Threonine--tRNA ligase (635 aa).

The TGS domain maps to 1–61 (MPIITLPDGN…EKDANIAIIT (61 aa)). The segment at 242–533 (DHRKIGKQLD…LTEEYAGVYP (292 aa)) is catalytic. The Zn(2+) site is built by C333, H384, and H510.

Belongs to the class-II aminoacyl-tRNA synthetase family. In terms of assembly, homodimer. Zn(2+) serves as cofactor.

The protein localises to the cytoplasm. The enzyme catalyses tRNA(Thr) + L-threonine + ATP = L-threonyl-tRNA(Thr) + AMP + diphosphate + H(+). Its function is as follows. Catalyzes the attachment of threonine to tRNA(Thr) in a two-step reaction: L-threonine is first activated by ATP to form Thr-AMP and then transferred to the acceptor end of tRNA(Thr). Also edits incorrectly charged L-seryl-tRNA(Thr). The protein is Threonine--tRNA ligase of Psychromonas ingrahamii (strain DSM 17664 / CCUG 51855 / 37).